The primary structure comprises 180 residues: MTRKKRSRGVGSEGPAVFREKSTTQVDVEARKSQKDKKRKGLKSGNRNAEALDPKHYANGQKKDPRLGSKKPIPLVVEKKPTTKKERRLSAEQELDMLENDAQLMVLLDRIEAGEKLGAGLQKQVDQKLDRIEHLMGRLGLLEVEEPEVTEEAPVRKGAKTDEDLLDQFENMDLDSFGKE.

Disordered stretches follow at residues 1–88 and 147–180; these read MTRK…KERR and PEVT…FGKE. 4 stretches are compositionally biased toward basic and acidic residues: residues 18-33, 50-67, 77-88, and 153-163; these read FREK…ARKS, EALD…DPRL, VEKKPTTKKERR, and APVRKGAKTDE. Positions 164–173 are enriched in acidic residues; that stretch reads DLLDQFENMD.

It belongs to the YihI family. As to quaternary structure, interacts with Der.

In terms of biological role, a GTPase-activating protein (GAP) that modifies Der/EngA GTPase function. May play a role in ribosome biogenesis. This chain is Der GTPase-activating protein YihI, found in Photobacterium profundum (strain SS9).